The sequence spans 293 residues: Haloalkane dehalogenase (293 aa).

The AB hydrolase-1 domain maps to 34-158 (PVLFLHGNPT…FQAFRTADVG (125 aa)). The active-site Nucleophile is Asp-106. The Proton donor role is filled by Glu-130. His-272 acts as the Proton acceptor in catalysis.

It belongs to the haloalkane dehalogenase family. Type 2 subfamily. As to quaternary structure, monomer.

The enzyme catalyses 1-haloalkane + H2O = a halide anion + a primary alcohol + H(+). Its pathway is xenobiotic degradation; haloalkane degradation. It participates in xenobiotic degradation; 1,3-dichloropropene degradation. In terms of biological role, catalyzes hydrolytic cleavage of carbon-halogen bonds in halogenated aliphatic compounds, leading to the formation of the corresponding primary alcohols, halide ions and protons. Has a broad substrate specificity, as it is able to dehalogenate mono- and di- chlorinated and brominated alkanes (up to at least C10), and the two isomers of 1,3-dichloropropene to 3-chloroallyl alcohol; the highest activity was found with 1,2-dibromoethane, while no activity was observed with the analog 1,2-dichloroethane. This chain is Haloalkane dehalogenase (dhaA), found in Pseudomonas pavonaceae.